Consider the following 400-residue polypeptide: Argininosuccinate synthase (400 aa).

10–18 lines the ATP pocket; that stretch reads AYSGGVDTS. L-citrulline is bound at residue Y89. G119 lines the ATP pocket. L-aspartate-binding residues include T121, N125, and D126. N125 serves as a coordination point for L-citrulline. R129, S177, S186, E262, and Y274 together coordinate L-citrulline.

The protein belongs to the argininosuccinate synthase family. Type 1 subfamily. As to quaternary structure, homotetramer.

Its subcellular location is the cytoplasm. The enzyme catalyses L-citrulline + L-aspartate + ATP = 2-(N(omega)-L-arginino)succinate + AMP + diphosphate + H(+). It participates in amino-acid biosynthesis; L-arginine biosynthesis; L-arginine from L-ornithine and carbamoyl phosphate: step 2/3. The chain is Argininosuccinate synthase from Synechococcus sp. (strain JA-2-3B'a(2-13)) (Cyanobacteria bacterium Yellowstone B-Prime).